The chain runs to 236 residues: LexA repressor (236 aa).

The disordered stretch occupies residues 1–25 (MNDSNDTSVAGGAAGADSRVLSADS). Residues 51–71 (IREIGDAVGLTSTSSVAHQLR) constitute a DNA-binding region (H-T-H motif). Catalysis depends on for autocatalytic cleavage activity residues Ser-160 and Lys-197.

The protein belongs to the peptidase S24 family. As to quaternary structure, homodimer.

The enzyme catalyses Hydrolysis of Ala-|-Gly bond in repressor LexA.. Its function is as follows. Represses a number of genes involved in the response to DNA damage (SOS response), including recA and lexA. In the presence of single-stranded DNA, RecA interacts with LexA causing an autocatalytic cleavage which disrupts the DNA-binding part of LexA, leading to derepression of the SOS regulon and eventually DNA repair. This Mycobacterium tuberculosis (strain ATCC 25177 / H37Ra) protein is LexA repressor.